Consider the following 67-residue polypeptide: Preprofallaxidin-4 (67 aa).

The first 22 residues, 1-22 (MASLKKFLFLVLFLGMVSLSIC), serve as a signal peptide directing secretion. The propeptide occupies 23–46 (DKEKREGENEEEEEEHEEESEEKR). The tract at residues 24-48 (KEKREGENEEEEEEHEEESEEKRGL) is disordered. Positions 30 to 42 (ENEEEEEEHEEES) are enriched in acidic residues.

This sequence belongs to the frog skin active peptide (FSAP) family. Dermaseptin subfamily. Expressed by the skin glands.

The protein resides in the secreted. This is Preprofallaxidin-4 from Litoria fallax (Eastern dwarf tree frog).